The primary structure comprises 1321 residues: Adhesion G protein-coupled receptor A3 (1321 aa).

The N-terminal stretch at 1–33 (MEPPGRRRGRAQPPLLLPLSLLALLALLGGGGG) is a signal peptide. Over 34 to 761 (GGAAALPAGC…YTQAASLLHP (728 aa)) the chain is Extracellular. 2 N-linked (GlcNAc...) asparagine glycosylation sites follow: Asn-81 and Asn-98. 4 LRR repeats span residues 82–103 (RTVT…SFSG), 106–127 (LLER…AFWG), 130–151 (SLKR…IFRG), and 154–175 (NLVR…TFDY). Residues Asn-159, Asn-206, Asn-301, Asn-332, Asn-433, Asn-453, and Asn-592 are each glycosylated (N-linked (GlcNAc...) asparagine). In terms of domain architecture, LRRCT spans 187–237 (EYLLCDCNILWMHRWVKEKNITVRDTRCVYPKSLQAQPVTGVKQELLTCDP). An Ig-like domain is found at 242-340 (PSFYMTPSHR…GNNTRTVDIV (99 aa)). Cys-264 and Cys-324 are disulfide-bonded. The GAIN-B domain maps to 583 to 750 (LDKQLSFKCN…AVLMDLTGSE (168 aa)). The stretch at 594–620 (SNTFSSLALKNTIVEASIQLPPSLFSP) is one LRR 5 repeat. N-linked (GlcNAc...) asparagine glycosylation is found at Asn-652, Asn-687, and Asn-728. Positions 701-750 (AARWDFDLLNGQGGWKSDGCHILYSDENITTIQCYSLSNYAVLMDLTGSE) are GPS. An intrachain disulfide couples Cys-720 to Cys-734. The helical transmembrane segment at 762-782 (VVYTTAIILLLCLLAVIVSYI) threads the bilayer. Topologically, residues 783-796 (YHHSLIRISLKSWH) are cytoplasmic. Residues 797–817 (MLVNLCFHIFLTCVVFVGGIT) traverse the membrane as a helical segment. The Extracellular segment spans residues 818-826 (QTRNASICQ). N-linked (GlcNAc...) asparagine glycosylation occurs at Asn-821. A helical transmembrane segment spans residues 827-847 (AVGIILHYSTLATVLWVGVTA). Over 848-876 (RNIYKQVTKKAKRCQDPDEPPPPPRPMLR) the chain is Cytoplasmic. A helical transmembrane segment spans residues 877–897 (FYLIGGGIPIIVCGITAAANI). Over 898-919 (KNYGSRPNAPYCWMAWEPSLGA) the chain is Extracellular. A helical transmembrane segment spans residues 920 to 940 (FYGPASFITFVNCMYFLSIFI). The Cytoplasmic segment spans residues 941–996 (QLKRHPERKYELKEPTEEQQRLAANENGEINHQDSMSLSLISTSALENEHTFHSQL). Residues 997–1017 (LGASLTLLLYVALWMFGALAV) traverse the membrane as a helical segment. Residues 1018-1024 (SLYYPLD) are Extracellular-facing. The helical transmembrane segment at 1025 to 1045 (LVFSFVFGATSLSFSAFFVVH) threads the bilayer. Over 1046–1321 (HCVNREDVRL…TGLWKHETTV (276 aa)) the chain is Cytoplasmic. The span at 1073-1083 (NVQPPNSNGTN) shows a compositional bias: polar residues. Disordered regions lie at residues 1073–1094 (NVQP…NSSA), 1198–1219 (VEGS…GHSR), 1231–1265 (QYNP…KKDA), and 1294–1321 (SNGQ…ETTV). A compositionally biased stretch (polar residues) spans 1233 to 1250 (NPPQQDSSDACSTLPKSS). Positions 1319–1321 (TTV) match the PDZ-binding motif.

It belongs to the G-protein coupled receptor 2 family. Adhesion G-protein coupled receptor (ADGR) subfamily. As to quaternary structure, interacts (via PDZ-binding motif) with DLG1.

It is found in the membrane. In terms of biological role, orphan receptor that may have a role in planar cell polarity pathway. This Homo sapiens (Human) protein is Adhesion G protein-coupled receptor A3.